Consider the following 688-residue polypeptide: Elongation factor G (688 aa).

Residues 8-282 (KNFRNFGIMA…AVVDFLPSPV (275 aa)) form the tr-type G domain. Residues 17 to 24 (AHIDAGKT), 81 to 85 (DTPGH), and 135 to 138 (NKMD) contribute to the GTP site.

Belongs to the TRAFAC class translation factor GTPase superfamily. Classic translation factor GTPase family. EF-G/EF-2 subfamily.

Its subcellular location is the cytoplasm. Its function is as follows. Catalyzes the GTP-dependent ribosomal translocation step during translation elongation. During this step, the ribosome changes from the pre-translocational (PRE) to the post-translocational (POST) state as the newly formed A-site-bound peptidyl-tRNA and P-site-bound deacylated tRNA move to the P and E sites, respectively. Catalyzes the coordinated movement of the two tRNA molecules, the mRNA and conformational changes in the ribosome. This chain is Elongation factor G (fusA), found in Mycoplasma genitalium (strain ATCC 33530 / DSM 19775 / NCTC 10195 / G37) (Mycoplasmoides genitalium).